Here is a 207-residue protein sequence, read N- to C-terminus: Protein GrpE (207 aa).

The span at 1 to 11 (MTETDGQKDNN) shows a compositional bias: basic and acidic residues. Residues 1-39 (MTETDGQKDNNQDTAQAAADPVVSKPYIMPDDPEEGSNE) are disordered.

It belongs to the GrpE family. In terms of assembly, homodimer.

It is found in the cytoplasm. Participates actively in the response to hyperosmotic and heat shock by preventing the aggregation of stress-denatured proteins, in association with DnaK and GrpE. It is the nucleotide exchange factor for DnaK and may function as a thermosensor. Unfolded proteins bind initially to DnaJ; upon interaction with the DnaJ-bound protein, DnaK hydrolyzes its bound ATP, resulting in the formation of a stable complex. GrpE releases ADP from DnaK; ATP binding to DnaK triggers the release of the substrate protein, thus completing the reaction cycle. Several rounds of ATP-dependent interactions between DnaJ, DnaK and GrpE are required for fully efficient folding. This is Protein GrpE from Rhodopseudomonas palustris (strain TIE-1).